Consider the following 131-residue polypeptide: UPF0102 protein YraN (131 aa).

It belongs to the UPF0102 family.

The sequence is that of UPF0102 protein YraN from Salmonella arizonae (strain ATCC BAA-731 / CDC346-86 / RSK2980).